Reading from the N-terminus, the 561-residue chain is DNA ligase B (561 aa).

Lys-125 acts as the N6-AMP-lysine intermediate in catalysis.

It belongs to the NAD-dependent DNA ligase family. LigB subfamily.

It carries out the reaction NAD(+) + (deoxyribonucleotide)n-3'-hydroxyl + 5'-phospho-(deoxyribonucleotide)m = (deoxyribonucleotide)n+m + AMP + beta-nicotinamide D-nucleotide.. Functionally, catalyzes the formation of phosphodiester linkages between 5'-phosphoryl and 3'-hydroxyl groups in double-stranded DNA using NAD as a coenzyme and as the energy source for the reaction. The chain is DNA ligase B from Salmonella arizonae (strain ATCC BAA-731 / CDC346-86 / RSK2980).